The sequence spans 586 residues: uncharacterized protein (586 aa).

The 284-residue stretch at 29 to 312 (YGIAIGSMVV…LARMRISLES (284 aa)) folds into the ABC transmembrane type-1 domain. Transmembrane regions (helical) follow at residues 30–50 (GIAIGSMVVVAVMTSASAWIM), 66–86 (VFGVAVTVAIIFAVKGLATYV), 162–184 (MVIQQPLLSLVSAAVGPGAILGV), and 256–276 (IMETLSGFAIAGVIALSGVLV). Residues 346 to 580 (IRFKDVNFSY…DGVYRRLYEL (235 aa)) enclose the ABC transporter domain. ATP is bound at residue 379-386 (GPSGAGKS).

Belongs to the ABC transporter superfamily.

It localises to the cell membrane. This is an uncharacterized protein from Sinorhizobium fredii (strain NBRC 101917 / NGR234).